Consider the following 430-residue polypeptide: Gamma-glutamyl phosphate reductase (430 aa).

The protein belongs to the gamma-glutamyl phosphate reductase family.

It is found in the cytoplasm. It catalyses the reaction L-glutamate 5-semialdehyde + phosphate + NADP(+) = L-glutamyl 5-phosphate + NADPH + H(+). The protein operates within amino-acid biosynthesis; L-proline biosynthesis; L-glutamate 5-semialdehyde from L-glutamate: step 2/2. In terms of biological role, catalyzes the NADPH-dependent reduction of L-glutamate 5-phosphate into L-glutamate 5-semialdehyde and phosphate. The product spontaneously undergoes cyclization to form 1-pyrroline-5-carboxylate. The chain is Gamma-glutamyl phosphate reductase from Rhodopseudomonas palustris (strain TIE-1).